The chain runs to 155 residues: Small ribosomal subunit protein uS7cz/uS7cy (155 aa).

This sequence belongs to the universal ribosomal protein uS7 family. As to quaternary structure, part of the 30S ribosomal subunit.

It is found in the plastid. The protein resides in the chloroplast. Its function is as follows. One of the primary rRNA binding proteins, it binds directly to 16S rRNA where it nucleates assembly of the head domain of the 30S subunit. The sequence is that of Small ribosomal subunit protein uS7cz/uS7cy (rps7-A) from Amborella trichopoda.